The sequence spans 266 residues: rRNA adenine N-6-methyltransferase (266 aa).

His14, Thr16, Gly41, Glu62, Asp87, and Asn103 together coordinate S-adenosyl-L-methionine.

The protein belongs to the class I-like SAM-binding methyltransferase superfamily. rRNA adenine N(6)-methyltransferase family.

Its function is as follows. Involved in erythromycin resistance. In Bacteroides fragilis, this protein is rRNA adenine N-6-methyltransferase (ermF).